Reading from the N-terminus, the 655-residue chain is Proprotein convertase subtilisin/kexin type 4 (655 aa).

Residues 1-26 (MRPSQTELWLGLTLTLALLAVRWASA) form the signal peptide. A propeptide spanning residues 27 to 110 (QAPIYVSSWA…QQTLRRRVKR (84 aa)) is cleaved from the precursor. One can recognise a Peptidase S8 domain in the interval 123 to 437 (QWYMNKEIQQ…YGLLDAGLLV (315 aa)). Active-site charge relay system residues include D155, H196, and S370. In terms of domain architecture, P/Homo B spans 446-580 (TKPQKKCAIR…TLLLYGTAED (135 aa)). A glycan (N-linked (GlcNAc...) asparagine) is linked at N472.

It belongs to the peptidase S8 family. Furin subfamily. The proPCSK4 form interacts with HSPA5; the interaction takes place at the endoplasmic reticulum. In terms of processing, N-glycosylated. Synthesized in the endoplasmic reticulum as a zymogen, is matured by autocatalytic cleavage between the prodomain and the catalytic domain. Expressed abundantly in the testis since postnatal Day 16. In testis, strongly detected in round and elongated spermatids as well as spermatocytes. Also observed in residual bodies engulfed by Sertoli cells at spermatogenic stages VIII and IX. In ovaries, expressed in macrophage-like cells of the ovarian theca, interstitium and corpora lutea.

The protein localises to the cytoplasmic vesicle. Its subcellular location is the secretory vesicle. It is found in the acrosome membrane. Its function is as follows. Proprotein convertase involved in the processing of hormone and other protein precursors at sites comprised of pairs of basic amino acid residues. In males, important for ADAM2 processing as well as other acrosomal proteins with roles in fertilization and critical for normal fertilization events such as sperm capacitation, acrosome reaction and binding of sperm to zona pellucida. Also plays a role in female fertility, involved in the regulation of trophoblast migration and placental development, may be through the proteolytical processing and activation of proteins such as IGF2. May also participate in folliculogenesis in the ovaries. The polypeptide is Proprotein convertase subtilisin/kexin type 4 (Pcsk4) (Mus musculus (Mouse)).